A 297-amino-acid polypeptide reads, in one-letter code: Urease accessory protein UreD (297 aa).

Positions 1-18 are enriched in low complexity; it reads MNSSAASPPAVSPHAAPS. Disordered stretches follow at residues 1 to 20 and 178 to 201; these read MNSS…PSRT and VDQA…PRRR.

This sequence belongs to the UreD family. In terms of assembly, ureD, UreF and UreG form a complex that acts as a GTP-hydrolysis-dependent molecular chaperone, activating the urease apoprotein by helping to assemble the nickel containing metallocenter of UreC. The UreE protein probably delivers the nickel.

It localises to the cytoplasm. Its function is as follows. Required for maturation of urease via the functional incorporation of the urease nickel metallocenter. This chain is Urease accessory protein UreD, found in Parafrankia sp. (strain EAN1pec).